Here is a 261-residue protein sequence, read N- to C-terminus: MLLKRRIGLLLSMVGVFMLLAGCSSVKEPITADSPHFWDKYVVYPLSELITYVAKLTGDNYGLSIILVTILIRLLILPLMIKQLRSSKAMQALQPEMQKLKEKYSSKDQKTQQKLQQETMALFQKHGVNPLAGCFPILIQMPILIGFYHAIMRTQAISEHSFLWFDLGEKDPYYILPIVAGVATFVQQKLMMAGNAQQNPQMAMMLWIMPIMIIVFAINFPAALSLYWVVGNLFMIAQTFLIKGPDIKKNPEPQKAGGKKK.

The N-terminal stretch at methionine 1 to glycine 22 is a signal peptide. Cysteine 23 carries the N-palmitoyl cysteine lipid modification. A lipid anchor (S-diacylglycerol cysteine) is attached at cysteine 23. Helical transmembrane passes span tyrosine 61 to isoleucine 81, leucine 131 to isoleucine 151, tyrosine 174 to glycine 194, methionine 204 to leucine 224, and serine 225 to proline 245.

The protein belongs to the OXA1/ALB3/YidC family. Type 2 subfamily. Mostly monomeric, it may also form dimers. Interacts with SpoIIIAE. Forms a complex with the F(1)F(0) ATP synthase in which can be found the alpha, beta, gamma, delta and epsilon subunits of F(1) and a, b and subunits of F(0). YqgA is found in the same complex.

Its subcellular location is the cell membrane. Functionally, required for the insertion and/or proper folding and/or complex formation of integral membrane proteins into the membrane. Involved in integration of membrane proteins that insert both dependently and independently of the Sec translocase complex, as well as at least some lipoproteins. Also involved in protein secretion processes. Essential for sporulation by activating sigma factor SpoIIIG/SigG after engulfment is completed in the prespore, maybe by acting on SpoIIIAE. It has an overlapping, although partly distinct, function compared to YqjG(MisCB). The polypeptide is Membrane protein insertase MisCA (misCA) (Bacillus subtilis (strain 168)).